The chain runs to 526 residues: Alpha-N-acetylgalactosaminide alpha-2,6-sialyltransferase 1 (526 aa).

The Cytoplasmic segment spans residues methionine 1–glutamine 12. Residues alanine 13–proline 33 traverse the membrane as a helical; Signal-anchor for type II membrane protein segment. At arginine 34–asparagine 526 the chain is on the lumenal side. Positions serine 49–serine 182 are disordered. A compositionally biased stretch (basic and acidic residues) spans lysine 81–threonine 106. Residues alanine 161–proline 171 are compositionally biased toward polar residues. N-linked (GlcNAc...) asparagine glycosylation is found at asparagine 206, asparagine 228, asparagine 259, asparagine 303, and asparagine 388. 2 disulfides stabilise this stretch: cysteine 207–cysteine 290 and cysteine 293–cysteine 461.

It belongs to the glycosyltransferase 29 family. Glycosylated; autosialylated. In terms of tissue distribution, submaxillary gland, mammary gland, spleen and colon.

Its subcellular location is the golgi apparatus membrane. The catalysed reaction is a beta-D-galactosyl-(1-&gt;3)-N-acetyl-alpha-D-galactosaminyl derivative + CMP-N-acetyl-beta-neuraminate = a beta-D-galactosyl-(1-&gt;3)-[N-acetyl-alpha-neuraminyl-(2-&gt;6)]-N-acetyl-alpha-D-galactosaminyl derivative + CMP + H(+). It catalyses the reaction a 3-O-[N-acetyl-alpha-D-galactosaminyl]-L-seryl-[protein] + CMP-N-acetyl-beta-neuraminate = a 3-O-[N-acetyl-alpha-neuraminosyl-(2-&gt;6)-N-acetyl-alpha-D-galactosaminyl]-L-seryl-[protein] + CMP + H(+). It carries out the reaction a 3-O-[N-acetyl-alpha-D-galactosaminyl]-L-threonyl-[protein] + CMP-N-acetyl-beta-neuraminate = a 3-O-[N-acetyl-alpha-neuraminosyl-(2-&gt;6)-N-acetyl-alpha-D-galactosaminyl]-L-threonyl-[protein] + CMP + H(+). The enzyme catalyses a 3-O-[beta-D-galactosyl-(1-&gt;3)-N-acetyl-alpha-D-galactosaminyl]-L-seryl-[protein] + CMP-N-acetyl-beta-neuraminate = a 3-O-{beta-D-galactosyl-(1-&gt;3)-[N-acetyl-alpha-neuraminosyl-(2-&gt;6)]-N-acetyl-alpha-D-galactosaminyl}-L-seryl-[protein] + CMP + H(+). The catalysed reaction is a 3-O-[beta-D-galactosyl-(1-&gt;3)-N-acetyl-alpha-D-galactosaminyl]-L-threonyl-[protein] + CMP-N-acetyl-beta-neuraminate = a 3-O-{beta-D-galactosyl-(1-&gt;3)-[N-acetyl-alpha-neuraminosyl-(2-&gt;6)]-N-acetyl-alpha-D-galactosaminyl}-L-threonyl-[protein] + CMP + H(+). It catalyses the reaction a 3-O-[N-acetyl-alpha-neuraminyl-(2-&gt;3)-beta-D-galactosyl-(1-&gt;3)-N-acetyl-alpha-D-galactosaminyl]-L-threonyl-[protein] + CMP-N-acetyl-beta-neuraminate = a 3-O-{alpha-Neu5Ac-(2-&gt;3)-beta-D-Gal-(1-&gt;3)-[alpha-Neu5Ac-(2-&gt;6)]-alpha-D-GalNAc}-L-threonyl-[protein] + CMP + H(+). Its pathway is protein modification; protein glycosylation. In terms of biological role, protein sialyltransferase specifically expressed in goblet cells that plays a key role in intestinal host-commensal homeostasis. Conjugates sialic acid with an alpha-2-6 linkage to N-acetylgalactosamine (GalNAc) glycan chains linked to serine or threonine in glycoproteins. Catalyzes the formation of the sialyl-Tn (S-Tn) antigen, an antigen found in intestinal goblet cells. Protein sialylation in globlet cells is essential for mucus integrity and is required to protect the intestinal mucus against excessive bacterial proteolytic degradation. The polypeptide is Alpha-N-acetylgalactosaminide alpha-2,6-sialyltransferase 1 (Mus musculus (Mouse)).